The chain runs to 411 residues: Dipeptidase 1 (411 aa).

The first 16 residues, M1–A16, serve as a signal peptide directing secretion. Residues H36 and D38 each contribute to the Zn(2+) site. The N-linked (GlcNAc...) asparagine glycan is linked to N57. Residues C87 and C170 are joined by a disulfide bond. E141 serves as a coordination point for Zn(2+). Position 168 (H168) interacts with substrate. Zn(2+)-binding residues include H214 and H235. C242 and C274 form a disulfide bridge. A substrate-binding site is contributed by R246. N-linked (GlcNAc...) asparagine glycosylation occurs at N279. Substrate is bound at residue D304. N-linked (GlcNAc...) asparagine glycans are attached at residues N332 and N358. Residue S385 is the site of GPI-anchor amidated serine attachment. Residues G386 to L411 constitute a propeptide, removed in mature form.

The protein belongs to the metallo-dependent hydrolases superfamily. Peptidase M19 family. As to quaternary structure, homodimer; disulfide-linked. It depends on Zn(2+) as a cofactor. Expressed in lung and kidneys.

It is found in the apical cell membrane. The protein localises to the cell projection. Its subcellular location is the microvillus membrane. It catalyses the reaction an L-aminoacyl-L-amino acid + H2O = 2 an L-alpha-amino acid. It carries out the reaction leukotriene D4 + H2O = leukotriene E4 + glycine. The enzyme catalyses a beta-lactam + H2O = a substituted beta-amino acid. The catalysed reaction is L-cystine-bis-glycine + 2 H2O = L-cystine + 2 glycine. It catalyses the reaction glycyldehydrophenylalanine + H2O = 2,3-didehydrophenylalanine + glycine. Inhibited by L-penicillamine. Beta-lactamase activity is inhibited by cilastatin. In terms of biological role, hydrolyzes a wide range of dipeptides including the conversion of leukotriene D4 to leukotriene E4. Hydrolyzes cystinyl-bis-glycine (cys-bis-gly) formed during glutathione degradation. Also possesses beta lactamase activity and can hydrolyze the beta-lactam antibiotic imipenem. Its function is as follows. Independently of its dipeptidase activity, acts as an adhesion receptor for neutrophil recruitment from bloodstream into inflamed lungs and liver. The polypeptide is Dipeptidase 1 (DPEP1) (Homo sapiens (Human)).